Reading from the N-terminus, the 187-residue chain is Elongation factor P (187 aa).

The protein belongs to the elongation factor P family.

The protein localises to the cytoplasm. Its pathway is protein biosynthesis; polypeptide chain elongation. In terms of biological role, involved in peptide bond synthesis. Stimulates efficient translation and peptide-bond synthesis on native or reconstituted 70S ribosomes in vitro. Probably functions indirectly by altering the affinity of the ribosome for aminoacyl-tRNA, thus increasing their reactivity as acceptors for peptidyl transferase. The sequence is that of Elongation factor P from Treponema denticola (strain ATCC 35405 / DSM 14222 / CIP 103919 / JCM 8153 / KCTC 15104).